The chain runs to 456 residues: uncharacterized protein (456 aa).

Basic and acidic residues-rich tracts occupy residues 181-210 (DQRKESIVNDERKKNPEFREKPDKNEDKKV) and 217-231 (KEIENKGIDHEENEE). A disordered region spans residues 181–231 (DQRKESIVNDERKKNPEFREKPDKNEDKKVKPPPSLKEIENKGIDHEENEE). Residues 216 to 248 (LKEIENKGIDHEENEEDKKRELMFKLQLLQKQY) are a coiled coil. Residues 347 to 365 (LALAILFNAVWFIAAKMIM) traverse the membrane as a helical segment. Polar residues predominate over residues 383–407 (NKSGTTPNSVSPRTWGNSKSPQSEF). The disordered stretch occupies residues 383–456 (NKSGTTPNSV…MREQGIETLK (74 aa)). Over residues 441-456 (DESRREMREQGIETLK) the composition is skewed to basic and acidic residues.

Belongs to the IIV-6 067R family.

The protein localises to the membrane. This is an uncharacterized protein from Invertebrate iridescent virus 6 (IIV-6).